The primary structure comprises 119 residues: Large ribosomal subunit protein uL22 (119 aa).

It belongs to the universal ribosomal protein uL22 family. Part of the 50S ribosomal subunit.

In terms of biological role, this protein binds specifically to 23S rRNA; its binding is stimulated by other ribosomal proteins, e.g. L4, L17, and L20. It is important during the early stages of 50S assembly. It makes multiple contacts with different domains of the 23S rRNA in the assembled 50S subunit and ribosome. The globular domain of the protein is located near the polypeptide exit tunnel on the outside of the subunit, while an extended beta-hairpin is found that lines the wall of the exit tunnel in the center of the 70S ribosome. In Rickettsia peacockii (strain Rustic), this protein is Large ribosomal subunit protein uL22.